We begin with the raw amino-acid sequence, 502 residues long: MEFSVKSGSPEKQRSACIVVGVYEPRRLSGIAEQLDKISEGYISNLLRRGDLEGKPGQMLLLHHVPNVLSERVLLVGCGKERELDERQYKQIITKTINTLNDTGSMEAVCFLTELHVKGRDTYWKVREAVESTQNSLYSFDALKTRKGETRRPLRKLVFNVPTRRELTVGERAIEHGMAVSTGTQLCRDVANMPPNICNPAYLASQARQIAENHENLTVTTVGEEQMAKLGMNSYLAVGRGSHNESVMTVMEYKGAVDSTEKPIVLVGKGLTFDSGGISLKPGEAMDEMKYDMGGAAGVIGTMLALCELKLPINVVGILAGCENMPSSNAYRPGDILTTMSGQTVEVLNTDAEGRLVLCDVLTYVERFDPELVVDTATLTGACVIALGKHASGLFSSHNPLAHELLNAGEQSGDRAWRMPLWDEYQEHLESPFADMTNLGGRPAGAITAACFLSRFAKKYNWAHLDVAGTAWNSGANKGSTGRPVPLLTQFLINRAGVEQGE.

K269 and D274 together coordinate Mn(2+). The active site involves K281. Residues D292, D351, and E353 each coordinate Mn(2+). Residue R355 is part of the active site.

This sequence belongs to the peptidase M17 family. It depends on Mn(2+) as a cofactor.

The protein localises to the cytoplasm. It catalyses the reaction Release of an N-terminal amino acid, Xaa-|-Yaa-, in which Xaa is preferably Leu, but may be other amino acids including Pro although not Arg or Lys, and Yaa may be Pro. Amino acid amides and methyl esters are also readily hydrolyzed, but rates on arylamides are exceedingly low.. It carries out the reaction Release of an N-terminal amino acid, preferentially leucine, but not glutamic or aspartic acids.. Presumably involved in the processing and regular turnover of intracellular proteins. Catalyzes the removal of unsubstituted N-terminal amino acids from various peptides. In Shewanella loihica (strain ATCC BAA-1088 / PV-4), this protein is Probable cytosol aminopeptidase.